Here is a 327-residue protein sequence, read N- to C-terminus: MGGSTRDPGALEGAGILGQSPYERLSQRMLDISGDRGVLKDIIREGTGDTVTPDASVLVKYSGYLEHMDKPFDSNCFRKTPRLMKLGEDITLWGMELGLLSMRKGELARFLFKPAYAYGTLGCPPLIPPNATVLFEIELIDFLDSAESDKFCALSAEQQEQFPLQKVLKVAATEREFGNYLFRQNRFCDAKVRYKRALLLLHRRLATCEEQHLVEPAVLLVLLNLSFVYLKLDRPAMALRYGEQALLIDKRNAKALFRCGQACLLLTEYERARDFLVRAQKEQPCNHDINNELKKLSSHYRDYVDREREMCHRMFAPCGSRSSVGGN.

Residues 54 to 143 (DASVLVKYSG…LFEIELIDFL (90 aa)) form the PPIase FKBP-type domain. 3 TPR repeats span residues 171–204 (AATEREFGNYLFRQNRFCDAKVRYKRALLLLHRR), 219–252 (LLVLLNLSFVYLKLDRPAMALRYGEQALLIDKRN), and 253–286 (AKALFRCGQACLLLTEYERARDFLVRAQKEQPCN).

It belongs to the FKBP6 family. In terms of assembly, interacts with HSP72/HSPA2 and CLTC. Interacts with GAPDH; leading to inhibit GAPDH catalytic activity. Interacts (via TPR repeats) with HSP90. Testis-specific.

It localises to the cytoplasm. The protein localises to the cytosol. It is found in the nucleus. The protein resides in the chromosome. In terms of biological role, co-chaperone required during spermatogenesis to repress transposable elements and prevent their mobilization, which is essential for the germline integrity. Acts via the piRNA metabolic process, which mediates the repression of transposable elements during meiosis by forming complexes composed of piRNAs and Piwi proteins and govern the methylation and subsequent repression of transposons. Acts as a co-chaperone via its interaction with HSP90 and is required for the piRNA amplification process, the secondary piRNA biogenesis. May be required together with HSP90 in removal of 16 nucleotide ping-pong by-products from Piwi complexes, possibly facilitating turnover of Piwi complexes. The sequence is that of Inactive peptidyl-prolyl cis-trans isomerase FKBP6 (Fkbp6) from Mus musculus (Mouse).